Reading from the N-terminus, the 199-residue chain is Small ribosomal subunit protein eS1 (199 aa).

Belongs to the eukaryotic ribosomal protein eS1 family.

The chain is Small ribosomal subunit protein eS1 from Pyrococcus abyssi (strain GE5 / Orsay).